The primary structure comprises 300 residues: NAD kinase (300 aa).

D75 functions as the Proton acceptor in the catalytic mechanism. NAD(+) contacts are provided by residues 75 to 76, 149 to 150, R177, D179, 190 to 195, A214, and Q248; these read DG, ND, and TAYALS.

Belongs to the NAD kinase family. The cofactor is a divalent metal cation.

The protein resides in the cytoplasm. The catalysed reaction is NAD(+) + ATP = ADP + NADP(+) + H(+). Functionally, involved in the regulation of the intracellular balance of NAD and NADP, and is a key enzyme in the biosynthesis of NADP. Catalyzes specifically the phosphorylation on 2'-hydroxyl of the adenosine moiety of NAD to yield NADP. The protein is NAD kinase of Burkholderia orbicola (strain MC0-3).